Here is a 299-residue protein sequence, read N- to C-terminus: Sulfate adenylyltransferase subunit 2 (299 aa).

The protein belongs to the PAPS reductase family. CysD subfamily. Sulfate-activating enzymes, NodP and NodQ, may be physically associated.

It carries out the reaction sulfate + ATP + H(+) = adenosine 5'-phosphosulfate + diphosphate. Functionally, proposed to provide activated sulfate for transfer to nod factor. In Rhizobium meliloti (strain 1021) (Ensifer meliloti), this protein is Sulfate adenylyltransferase subunit 2 (nodP).